The following is a 264-amino-acid chain: Cell division protein DivIB (264 aa).

Topologically, residues 1–23 (MAVYEERIPQVKQQRPRRRGNRK) are cytoplasmic. Residues 24–44 (LVFLLVLFFLTILIIVFIRSP) form a helical membrane-spanning segment. The Extracellular segment spans residues 45–264 (YSKVQEIRVT…GQEQPQQPQQ (220 aa)). The region spanning 46 to 114 (SKVQEIRVTG…GLITLHITEQ (69 aa)) is the POTRA domain.

It belongs to the FtsQ/DivIB family. DivIB subfamily.

The protein localises to the cell membrane. Cell division protein that may be involved in stabilizing or promoting the assembly of the division complex. This is Cell division protein DivIB from Brevibacillus brevis (strain 47 / JCM 6285 / NBRC 100599).